We begin with the raw amino-acid sequence, 450 residues long: Glucose-6-phosphate isomerase (450 aa).

Thr-39 bears the Phosphothreonine mark. Glu-291 serves as the catalytic Proton donor. Catalysis depends on residues His-312 and Lys-426.

The protein belongs to the GPI family.

Its subcellular location is the cytoplasm. It catalyses the reaction alpha-D-glucose 6-phosphate = beta-D-fructose 6-phosphate. It participates in carbohydrate biosynthesis; gluconeogenesis. Its pathway is carbohydrate degradation; glycolysis; D-glyceraldehyde 3-phosphate and glycerone phosphate from D-glucose: step 2/4. In terms of biological role, catalyzes the reversible isomerization of glucose-6-phosphate to fructose-6-phosphate. In Bacillus cereus (strain G9842), this protein is Glucose-6-phosphate isomerase.